The sequence spans 474 residues: Trehalose-6-phosphate synthase (474 aa).

Residue arginine 10 participates in D-glucose 6-phosphate binding. 22-23 (GG) is a UDP-alpha-D-glucose binding site. The D-glucose 6-phosphate site is built by tyrosine 77 and aspartate 131. Residues arginine 263 and lysine 268 each coordinate UDP-alpha-D-glucose. Arginine 301 contacts D-glucose 6-phosphate. Residues phenylalanine 340 and 366–370 (LVAKE) each bind UDP-alpha-D-glucose.

This sequence belongs to the glycosyltransferase 20 family. Homotetramer.

It carries out the reaction D-glucose 6-phosphate + UDP-alpha-D-glucose = alpha,alpha-trehalose 6-phosphate + UDP + H(+). The protein operates within glycan biosynthesis; trehalose biosynthesis. In terms of biological role, probably involved in the osmoprotection via the biosynthesis of trehalose. Catalyzes the transfer of glucose from UDP-alpha-D-glucose (UDP-Glc) to D-glucose 6-phosphate (Glc-6-P) to form trehalose-6-phosphate. Acts with retention of the anomeric configuration of the UDP-sugar donor. This is Trehalose-6-phosphate synthase from Escherichia coli O1:K1 / APEC.